Consider the following 363-residue polypeptide: Fructose-bisphosphate aldolase (363 aa).

2 residues coordinate substrate: Arg56 and Lys147. The active-site Proton acceptor is the Glu188. The Schiff-base intermediate with dihydroxyacetone-P role is filled by Lys230.

The protein belongs to the class I fructose-bisphosphate aldolase family.

The catalysed reaction is beta-D-fructose 1,6-bisphosphate = D-glyceraldehyde 3-phosphate + dihydroxyacetone phosphate. It participates in carbohydrate degradation; glycolysis; D-glyceraldehyde 3-phosphate and glycerone phosphate from D-glucose: step 4/4. The sequence is that of Fructose-bisphosphate aldolase (FBPA) from Echinococcus multilocularis (Fox tapeworm).